We begin with the raw amino-acid sequence, 217 residues long: Monomethylamine corrinoid protein 1 (217 aa).

Residues M1 to E91 enclose the B12-binding N-terminal domain. In terms of domain architecture, B12-binding spans A93–K217. Methylcob(III)alamin is bound at residue H106.

Can form a complex with MtmB.

It functions in the pathway one-carbon metabolism; methanogenesis from methylamine. Its function is as follows. Acts as a methyl group carrier between MtmB and MtbA. In Methanosarcina barkeri, this protein is Monomethylamine corrinoid protein 1 (mtmC1).